Consider the following 749-residue polypeptide: Transcription factor RFX3 (749 aa).

The segment at residues His-183–Pro-258 is a DNA-binding region (RFX-type winged-helix). A disordered region spans residues Val-663 to Leu-699. Residues Ser-674 to Ser-687 show a composition bias toward acidic residues. Over residues Ser-688–Glu-698 the composition is skewed to basic and acidic residues.

Belongs to the RFX family. As to quaternary structure, heterodimer; heterodimerizes with RFX1 and RFX2, and RFX6. In terms of tissue distribution, expressed in ciliated cells of the node and in the ciliated ependymal cells of the subcommissural organ (SCO), choroid plexuses (CP) and ventricular walls during embryonic and postnatal development. Expressed in developing and mature pancreatic endocrine cells during embryogenesis and in adults (at protein level).

It is found in the nucleus. In terms of biological role, transcription factor required for ciliogenesis and islet cell differentiation during endocrine pancreas development. Essential for the differentiation of nodal monocilia and left-right asymmetry specification during embryogenesis. Required for the biogenesis of motile cilia by governing growth and beating efficiency of motile cells. Also required for ciliated ependymal cell differentiation. Together with RFX6, participates in the differentiation of 4 of the 5 islet cell types during endocrine pancreas development, with the exception of pancreatic PP (polypeptide-producing) cells. Regulates transcription by forming a heterodimer with another RFX protein and binding to the X-box in the promoter of target genes. Regulates the expression of genes involved in ciliary assembly (DYNC2LI1, FOXJ1 and BBS4) and genes involved in ciliary motility (DNAH11, DNAH9 and DNAH5). Represses transcription of MAP1A in non-neuronal cells but not in neuronal cells. This Mus musculus (Mouse) protein is Transcription factor RFX3 (Rfx3).